The chain runs to 216 residues: Ribosomal RNA small subunit methyltransferase G (216 aa).

Residues Gly73, Leu78, 124 to 125 (AE), and Arg139 each bind S-adenosyl-L-methionine.

The protein belongs to the methyltransferase superfamily. RNA methyltransferase RsmG family.

The protein localises to the cytoplasm. Functionally, specifically methylates the N7 position of guanine in position 518 of 16S rRNA. The polypeptide is Ribosomal RNA small subunit methyltransferase G (Arthrobacter sp. (strain FB24)).